Consider the following 32-residue polypeptide: Conotoxin Cltx-4 (32 aa).

4 positions are modified to 4-hydroxyproline: proline 2, proline 24, proline 28, and proline 30. Serine 32 carries the serine amide modification.

Contains 4 disulfide bonds. Expressed by the venom duct.

It is found in the secreted. This chain is Conotoxin Cltx-4, found in Californiconus californicus (California cone).